The chain runs to 354 residues: Protein Wnt-11 (354 aa).

The first 24 residues, 1–24 (MRARPQVCEALLFALALHTGVCYG), serve as a signal peptide directing secretion. N-linked (GlcNAc...) asparagine glycans are attached at residues Asn40 and Asn90. Disulfide bonds link Cys80/Cys91, Cys130/Cys138, and Cys140/Cys157. N-linked (GlcNAc...) asparagine glycosylation is present at Asn160. 8 cysteine pairs are disulfide-bonded: Cys209–Cys223, Cys211–Cys218, Cys283–Cys314, Cys299–Cys309, Cys313–Cys353, Cys329–Cys344, Cys331–Cys341, and Cys336–Cys337. Residue Ser215 is the site of O-palmitoleoyl serine; by PORCN attachment. Asn300 and Asn304 each carry an N-linked (GlcNAc...) asparagine glycan.

Belongs to the Wnt family. In terms of processing, palmitoleoylation is required for efficient binding to frizzled receptors. Depalmitoleoylation leads to Wnt signaling pathway inhibition.

The protein resides in the secreted. The protein localises to the extracellular space. It is found in the extracellular matrix. Its function is as follows. Ligand for members of the frizzled family of seven transmembrane receptors. Probable developmental protein. May be a signaling molecule which affects the development of discrete regions of tissues. Is likely to signal over only few cell diameters. In Mus musculus (Mouse), this protein is Protein Wnt-11 (Wnt11).